Reading from the N-terminus, the 442-residue chain is MSDTIAAIATAHGVGSISIVRLSGERALEFALKLSHKTKLTPRHATFTKLFNQNNEIIDEAIMIYFKAPYSFTGEDIVEFQTHGGFSVSEVLLEELVSLGARLALAGEFSKRACLNGKMTPLKALNIQDLILSKSALAAKIIARNMQGNLGELLEKIRTDLVKTLAFVETSIDYADDDLPSDLLEQISTMCEENSKILKEIYTLSQSKKGLIEGFKIAIVGKPNVGKSSLLNALLSYERAIVSDIAGTTRDTIEENFKLGTHLLRIIDTAGIRESKDVIEQIGVALSKKSLEDADIILAVFDASRVQDKEDEKIFDLLANTDKKIFWILNKSDLENVFKNTQNKNFIKLSAQKDITLLKEELQNYLNSFDSEGIMVSSLDLINACKISSEAIFRAKGLLEESSLELFAFELNLAINELARFTKDFQRDEILDEMFGNFCLGK.

(6S)-5-formyl-5,6,7,8-tetrahydrofolate is bound by residues R21, E79, and K118. The 154-residue stretch at G214–N367 folds into the TrmE-type G domain. N224 contributes to the K(+) binding site. Residues N224–S229, S243–T249, and D268–G271 each bind GTP. S228 contacts Mg(2+). The K(+) site is built by S243, I245, and T248. Mg(2+) is bound at residue T249. K442 lines the (6S)-5-formyl-5,6,7,8-tetrahydrofolate pocket.

Belongs to the TRAFAC class TrmE-Era-EngA-EngB-Septin-like GTPase superfamily. TrmE GTPase family. Homodimer. Heterotetramer of two MnmE and two MnmG subunits. K(+) is required as a cofactor.

The protein localises to the cytoplasm. Exhibits a very high intrinsic GTPase hydrolysis rate. Involved in the addition of a carboxymethylaminomethyl (cmnm) group at the wobble position (U34) of certain tRNAs, forming tRNA-cmnm(5)s(2)U34. This Campylobacter jejuni subsp. jejuni serotype O:23/36 (strain 81-176) protein is tRNA modification GTPase MnmE.